Reading from the N-terminus, the 202-residue chain is Regulator of G-protein signaling 16 (202 aa).

Residues cysteine 2 and cysteine 12 are each lipidated (S-palmitoyl cysteine). The RGS domain occupies 65–181; that stretch reads SFDLLLSSKN…LKSPAYRDLA (117 aa). The residue at position 168 (tyrosine 168) is a Phosphotyrosine; by EGFR. The residue at position 177 (tyrosine 177) is a Phosphotyrosine.

Interacts with GNAI1 and GNAQ. Interacts with GNAI2, GNAI3 and GNAO1. In terms of processing, palmitoylated on Cys-2 and/or Cys-12. Phosphorylated. Phosphorylation at Tyr-168 by EGFR enhances GTPase accelerating (GAP) activity toward GNAI1. Abundantly expressed in retina with lower levels of expression in most other tissues.

It is found in the membrane. Its function is as follows. Regulates G protein-coupled receptor signaling cascades. Inhibits signal transduction by increasing the GTPase activity of G protein alpha subunits, thereby driving them into their inactive GDP-bound form. Plays an important role in the phototransduction cascade by regulating the lifetime and effective concentration of activated transducin alpha. May regulate extra and intracellular mitogenic signals. In Homo sapiens (Human), this protein is Regulator of G-protein signaling 16 (RGS16).